The sequence spans 679 residues: Methionine--tRNA ligase (679 aa).

The 'HIGH' region signature appears at 15–25 (PYANGPVHIGH). Cys147, Cys150, Cys160, and Cys163 together coordinate Zn(2+). Positions 332 to 336 (KISTS) match the 'KMSKS' region motif. An ATP-binding site is contributed by Thr335. One can recognise a tRNA-binding domain in the interval 578-679 (DFMKLDIRVG…KEVKPGSEVK (102 aa)).

Belongs to the class-I aminoacyl-tRNA synthetase family. MetG type 1 subfamily. In terms of assembly, homodimer. Requires Zn(2+) as cofactor.

Its subcellular location is the cytoplasm. The catalysed reaction is tRNA(Met) + L-methionine + ATP = L-methionyl-tRNA(Met) + AMP + diphosphate. In terms of biological role, is required not only for elongation of protein synthesis but also for the initiation of all mRNA translation through initiator tRNA(fMet) aminoacylation. The sequence is that of Methionine--tRNA ligase from Parabacteroides distasonis (strain ATCC 8503 / DSM 20701 / CIP 104284 / JCM 5825 / NCTC 11152).